A 284-amino-acid polypeptide reads, in one-letter code: 2-dehydro-3-deoxyphosphooctonate aldolase (284 aa).

This sequence belongs to the KdsA family.

The protein resides in the cytoplasm. It carries out the reaction D-arabinose 5-phosphate + phosphoenolpyruvate + H2O = 3-deoxy-alpha-D-manno-2-octulosonate-8-phosphate + phosphate. The protein operates within carbohydrate biosynthesis; 3-deoxy-D-manno-octulosonate biosynthesis; 3-deoxy-D-manno-octulosonate from D-ribulose 5-phosphate: step 2/3. Its pathway is bacterial outer membrane biogenesis; lipopolysaccharide biosynthesis. The polypeptide is 2-dehydro-3-deoxyphosphooctonate aldolase (Synechococcus sp. (strain ATCC 27144 / PCC 6301 / SAUG 1402/1) (Anacystis nidulans)).